The following is a 397-amino-acid chain: Putative serine/threonine-protein kinase R301 (397 aa).

A Protein kinase domain is found at 25–397; sequence QIKSTSVGSG…IIRHFNSPRL (373 aa). Residues 31–39 and Lys53 contribute to the ATP site; that span reads VGSGGSDNI. Catalysis depends on Asp218, which acts as the Proton acceptor.

The protein belongs to the protein kinase superfamily. Ser/Thr protein kinase family.

It localises to the virion. It catalyses the reaction L-seryl-[protein] + ATP = O-phospho-L-seryl-[protein] + ADP + H(+). The catalysed reaction is L-threonyl-[protein] + ATP = O-phospho-L-threonyl-[protein] + ADP + H(+). This Acanthamoeba polyphaga (Amoeba) protein is Putative serine/threonine-protein kinase R301.